A 486-amino-acid chain; its full sequence is MTDTATAPVASDSVAGVGRIVRVTGPVVDIEFPHDSIPPVYNALKTTITIGEESTEITLEIALHLGDDVVRAIALKPTDGLVRGQEVRDTGAAISVPVGDITKGKVFNVTGDILNNEGGEPIEITERWPIHRKPPMFDQLESKTQLFETGIKVIDLLTPYVQGGKIGLFGGAGVGKTVLIQEMIQRVAQDHGGVSVFAGVGERTREGNDLIMEMEEAGVFDKTALVFGQMDEPPGTRLRVALSALTMAEYFRDVKNQDVLLFIDNIFRFTQAGSEVSTLLGRMPSAVGYQPNLADEMGVLQERITSTRGHSITSLQAIYVPADDYTDPAPATTFAHLDATTELSREIASRGLYPAVDPLTSTSRILDPRYLGQAHYDTATRVKAILQKNKELQEIIAILGVDELSEEDKVTVSRARRIQQFLSQNTYMAKKFTGVEGSTVPLKNTIESFSKIADGDYDHVAEQAFFNVGDLDDVERRWSEIQKENG.

170–177 serves as a coordination point for ATP; sequence GGAGVGKT.

This sequence belongs to the ATPase alpha/beta chains family. F-type ATPases have 2 components, CF(1) - the catalytic core - and CF(0) - the membrane proton channel. CF(1) has five subunits: alpha(3), beta(3), gamma(1), delta(1), epsilon(1). CF(0) has three main subunits: a(1), b(2) and c(9-12). The alpha and beta chains form an alternating ring which encloses part of the gamma chain. CF(1) is attached to CF(0) by a central stalk formed by the gamma and epsilon chains, while a peripheral stalk is formed by the delta and b chains.

Its subcellular location is the cell membrane. The enzyme catalyses ATP + H2O + 4 H(+)(in) = ADP + phosphate + 5 H(+)(out). Its function is as follows. Produces ATP from ADP in the presence of a proton gradient across the membrane. The catalytic sites are hosted primarily by the beta subunits. This is ATP synthase subunit beta from Clavibacter michiganensis subsp. michiganensis (strain NCPPB 382).